The sequence spans 461 residues: Probable carboxypeptidase MGYG_04702 (461 aa).

A signal peptide spans 1-20; sequence MQKTYLLALVSLLASSLVEA. Asn-48 and Asn-99 each carry an N-linked (GlcNAc...) asparagine glycan. Asp-176 serves as a coordination point for Zn(2+). Glu-208 functions as the Proton acceptor in the catalytic mechanism. A Zn(2+)-binding site is contributed by Glu-209. Asn-396 is a glycosylation site (N-linked (GlcNAc...) asparagine).

Belongs to the peptidase M20A family. Requires Zn(2+) as cofactor.

The protein resides in the secreted. The chain is Probable carboxypeptidase MGYG_04702 from Arthroderma gypseum (strain ATCC MYA-4604 / CBS 118893) (Microsporum gypseum).